Reading from the N-terminus, the 235-residue chain is uncharacterized protein (235 aa).

This is an uncharacterized protein from Mycoplasma pneumoniae (strain ATCC 29342 / M129 / Subtype 1) (Mycoplasmoides pneumoniae).